The following is a 674-amino-acid chain: Probable copper-transporting P-type ATPase B (674 aa).

Positions 1 to 22 are disordered; sequence MNHSNQMHHDNHESHNHHSGHA. Residues 7 to 16 are compositionally biased toward basic and acidic residues; that stretch reads MHHDNHESHN. The next 6 helical transmembrane spans lie at 32–52, 57–77, 95–115, 127–147, 284–304, and 315–335; these read FFVSLIFAIPIILLSPLMGIN, FTFPGSEWVVLILSTILFFYG, GMMTLVALGISVAYIYSLYAF, TMDFFWELATLILIMLLGHWI, GYLFYFAVIVGVISFIVWMLI, and LVTVLVIACPHALGLAIPLVT. Aspartate 367 acts as the 4-aspartylphosphate intermediate in catalysis. Mg(2+) contacts are provided by aspartate 565 and aspartate 569. Transmembrane regions (helical) follow at residues 623-645 and 649-671; these read LWWGAGYNIVAVPLAAGALAFVG and SPAVGAILMSLSTVIVAINAFTL.

The protein belongs to the cation transport ATPase (P-type) (TC 3.A.3) family. Type IB subfamily.

It localises to the cell membrane. The catalysed reaction is Cu(+)(in) + ATP + H2O = Cu(+)(out) + ADP + phosphate + H(+). Its function is as follows. Involved in copper transport. In Staphylococcus epidermidis (strain ATCC 12228 / FDA PCI 1200), this protein is Probable copper-transporting P-type ATPase B (copB).